Here is a 400-residue protein sequence, read N- to C-terminus: Elongation factor Tu 2 (400 aa).

The region spanning 10-209 (KPHVNIGTIG…AVDEYIPTPQ (200 aa)) is the tr-type G domain. The G1 stretch occupies residues 19–26 (GHVDHGKT). 19–26 (GHVDHGKT) lines the GTP pocket. Position 26 (Thr-26) interacts with Mg(2+). Residues 60–64 (GITIN) form a G2 region. The segment at 81 to 84 (DCPG) is G3. GTP contacts are provided by residues 81 to 85 (DCPGH) and 136 to 139 (NKAD). Residues 136-139 (NKAD) are G4. The segment at 174–176 (SAL) is G5.

It belongs to the TRAFAC class translation factor GTPase superfamily. Classic translation factor GTPase family. EF-Tu/EF-1A subfamily. As to quaternary structure, monomer.

The protein resides in the cytoplasm. It catalyses the reaction GTP + H2O = GDP + phosphate + H(+). Its function is as follows. GTP hydrolase that promotes the GTP-dependent binding of aminoacyl-tRNA to the A-site of ribosomes during protein biosynthesis. This Pelotomaculum thermopropionicum (strain DSM 13744 / JCM 10971 / SI) protein is Elongation factor Tu 2.